Consider the following 224-residue polypeptide: Phosphoribosylformylglycinamidine synthase subunit PurQ (224 aa).

A Glutamine amidotransferase type-1 domain is found at 4 to 224 (RIGVITFPGT…YSALDSVLAS (221 aa)). Residue Cys-87 is the Nucleophile of the active site. Residues His-195 and Glu-197 contribute to the active site.

Part of the FGAM synthase complex composed of 1 PurL, 1 PurQ and 2 PurS subunits.

Its subcellular location is the cytoplasm. It catalyses the reaction N(2)-formyl-N(1)-(5-phospho-beta-D-ribosyl)glycinamide + L-glutamine + ATP + H2O = 2-formamido-N(1)-(5-O-phospho-beta-D-ribosyl)acetamidine + L-glutamate + ADP + phosphate + H(+). It carries out the reaction L-glutamine + H2O = L-glutamate + NH4(+). The protein operates within purine metabolism; IMP biosynthesis via de novo pathway; 5-amino-1-(5-phospho-D-ribosyl)imidazole from N(2)-formyl-N(1)-(5-phospho-D-ribosyl)glycinamide: step 1/2. Functionally, part of the phosphoribosylformylglycinamidine synthase complex involved in the purines biosynthetic pathway. Catalyzes the ATP-dependent conversion of formylglycinamide ribonucleotide (FGAR) and glutamine to yield formylglycinamidine ribonucleotide (FGAM) and glutamate. The FGAM synthase complex is composed of three subunits. PurQ produces an ammonia molecule by converting glutamine to glutamate. PurL transfers the ammonia molecule to FGAR to form FGAM in an ATP-dependent manner. PurS interacts with PurQ and PurL and is thought to assist in the transfer of the ammonia molecule from PurQ to PurL. This is Phosphoribosylformylglycinamidine synthase subunit PurQ from Mycobacterium leprae (strain TN).